A 122-amino-acid polypeptide reads, in one-letter code: Large ribosomal subunit protein bL12 (122 aa).

It belongs to the bacterial ribosomal protein bL12 family. Homodimer. Part of the ribosomal stalk of the 50S ribosomal subunit. Forms a multimeric L10(L12)X complex, where L10 forms an elongated spine to which 2 to 4 L12 dimers bind in a sequential fashion. Binds GTP-bound translation factors.

Functionally, forms part of the ribosomal stalk which helps the ribosome interact with GTP-bound translation factors. Is thus essential for accurate translation. This is Large ribosomal subunit protein bL12 from Clostridium botulinum (strain 657 / Type Ba4).